The chain runs to 255 residues: Hydroxyacylglutathione hydrolase (255 aa).

Histidine 52, histidine 54, aspartate 56, histidine 57, histidine 108, aspartate 130, and histidine 168 together coordinate Zn(2+).

Belongs to the metallo-beta-lactamase superfamily. Glyoxalase II family. In terms of assembly, monomer. Requires Zn(2+) as cofactor.

It carries out the reaction an S-(2-hydroxyacyl)glutathione + H2O = a 2-hydroxy carboxylate + glutathione + H(+). It functions in the pathway secondary metabolite metabolism; methylglyoxal degradation; (R)-lactate from methylglyoxal: step 2/2. Functionally, thiolesterase that catalyzes the hydrolysis of S-D-lactoyl-glutathione to form glutathione and D-lactic acid. This is Hydroxyacylglutathione hydrolase from Albidiferax ferrireducens (strain ATCC BAA-621 / DSM 15236 / T118) (Rhodoferax ferrireducens).